The primary structure comprises 667 residues: Probable potassium transport system protein Kup (667 aa).

A run of 12 helical transmembrane segments spans residues 5-25 (GLLI…LYVM), 47-67 (ISLI…IIAL), 88-108 (AAWL…DGTL), 133-153 (VSNQ…LFSI), 164-184 (AFGP…LINI), 210-230 (AGFA…ALYS), 243-263 (SWPF…VWIL), 287-307 (LASI…LITG), 336-356 (IYIP…VLFF), 367-387 (GLSI…WLVL), 393-413 (LANL…MGSS), and 420-440 (GGYV…VWYF).

Belongs to the HAK/KUP transporter (TC 2.A.72) family.

The protein localises to the cell membrane. The catalysed reaction is K(+)(in) + H(+)(in) = K(+)(out) + H(+)(out). Functionally, transport of potassium into the cell. Likely operates as a K(+):H(+) symporter. In Lactobacillus delbrueckii subsp. bulgaricus (strain ATCC 11842 / DSM 20081 / BCRC 10696 / JCM 1002 / NBRC 13953 / NCIMB 11778 / NCTC 12712 / WDCM 00102 / Lb 14), this protein is Probable potassium transport system protein Kup.